Reading from the N-terminus, the 343-residue chain is Ribosomal RNA small subunit methyltransferase C (343 aa).

This sequence belongs to the methyltransferase superfamily. RsmC family. In terms of assembly, monomer.

The protein resides in the cytoplasm. The catalysed reaction is guanosine(1207) in 16S rRNA + S-adenosyl-L-methionine = N(2)-methylguanosine(1207) in 16S rRNA + S-adenosyl-L-homocysteine + H(+). Functionally, specifically methylates the guanine in position 1207 of 16S rRNA in the 30S particle. This chain is Ribosomal RNA small subunit methyltransferase C, found in Escherichia coli O7:K1 (strain IAI39 / ExPEC).